Here is a 433-residue protein sequence, read N- to C-terminus: 5-methylthioadenosine/S-adenosylhomocysteine deaminase (433 aa).

The Zn(2+) site is built by H67 and H69. Substrate contacts are provided by E96, R148, and H186. H213 lines the Zn(2+) pocket. Substrate contacts are provided by E216 and D301. A Zn(2+)-binding site is contributed by D301.

This sequence belongs to the metallo-dependent hydrolases superfamily. MTA/SAH deaminase family. The cofactor is Zn(2+).

The enzyme catalyses S-adenosyl-L-homocysteine + H2O + H(+) = S-inosyl-L-homocysteine + NH4(+). It carries out the reaction S-methyl-5'-thioadenosine + H2O + H(+) = S-methyl-5'-thioinosine + NH4(+). Its function is as follows. Catalyzes the deamination of 5-methylthioadenosine and S-adenosyl-L-homocysteine into 5-methylthioinosine and S-inosyl-L-homocysteine, respectively. Is also able to deaminate adenosine. This Desulforamulus reducens (strain ATCC BAA-1160 / DSM 100696 / MI-1) (Desulfotomaculum reducens) protein is 5-methylthioadenosine/S-adenosylhomocysteine deaminase.